The following is an 84-amino-acid chain: METVITATIIGASILLAFAALGTAIGFAILGGKFLESSARQPELASSLQTKMFIVAGLLDAIAMIAVGISLLFIFANPFIGLLH.

2 helical membrane passes run 9 to 29 and 54 to 74; these read IIGASILLAFAALGTAIGFAI and IVAGLLDAIAMIAVGISLLFI.

Belongs to the ATPase C chain family. As to quaternary structure, F-type ATPases have 2 components, F(1) - the catalytic core - and F(0) - the membrane proton channel. F(1) has five subunits: alpha(3), beta(3), gamma(1), delta(1), epsilon(1). F(0) has three main subunits: a(1), b(2) and c(10-14). The alpha and beta chains form an alternating ring which encloses part of the gamma chain. F(1) is attached to F(0) by a central stalk formed by the gamma and epsilon chains, while a peripheral stalk is formed by the delta and b chains.

The protein resides in the cell inner membrane. Functionally, f(1)F(0) ATP synthase produces ATP from ADP in the presence of a proton or sodium gradient. F-type ATPases consist of two structural domains, F(1) containing the extramembraneous catalytic core and F(0) containing the membrane proton channel, linked together by a central stalk and a peripheral stalk. During catalysis, ATP synthesis in the catalytic domain of F(1) is coupled via a rotary mechanism of the central stalk subunits to proton translocation. Key component of the F(0) channel; it plays a direct role in translocation across the membrane. A homomeric c-ring of between 10-14 subunits forms the central stalk rotor element with the F(1) delta and epsilon subunits. In Haemophilus influenzae (strain PittEE), this protein is ATP synthase subunit c.